The following is a 390-amino-acid chain: Neuromedin-B receptor (390 aa).

Residues methionine 1–leucine 20 form a disordered region. The Extracellular segment spans residues methionine 1–valine 41. Asparagine 8 carries an N-linked (GlcNAc...) asparagine glycan. The helical transmembrane segment at isoleucine 42–valine 65 threads the bilayer. Residues lysine 66–asparagine 79 are Cytoplasmic-facing. A helical membrane pass occupies residues isoleucine 80 to valine 99. Over aspartate 100 to lysine 117 the chain is Extracellular. Cysteine 116 and cysteine 198 form a disulfide bridge. A helical membrane pass occupies residues leucine 118 to alanine 139. The Cytoplasmic portion of the chain corresponds to aspartate 140–valine 156. Residues valine 157–proline 177 traverse the membrane as a helical segment. At glutamate 178–isoleucine 211 the chain is on the extracellular side. N-linked (GlcNAc...) asparagine glycosylation is present at asparagine 192. Residues histidine 212 to isoleucine 235 traverse the membrane as a helical segment. At alanine 236–lysine 266 the chain is on the cytoplasmic side. A helical transmembrane segment spans residues isoleucine 267–leucine 287. The Extracellular segment spans residues tyrosine 288–serine 299. The chain crosses the membrane as a helical span at residues leucine 300–leucine 327. Over serine 328–leucine 390 the chain is Cytoplasmic. Residue cysteine 341 is the site of S-palmitoyl cysteine attachment. A Phosphoserine modification is found at serine 352.

This sequence belongs to the G-protein coupled receptor 1 family. Brain (olfactory bulb and central thalamic regions), and esophagus.

Its subcellular location is the cell membrane. Its function is as follows. Receptor for neuromedin-B. Contributes to the maintenance of basal sigh rate through signaling in the pre-Botzinger complex, a cluster of several thousand neurons in the ventrolateral medulla responsible for inspiration during respiratory activity. Contributes to the induction of sneezing following exposure to chemical irritants or allergens which causes release of NMB by nasal sensory neurons and activation of NMBR-expressing neurons in the sneeze-evoking region of the brainstem. These in turn activate neurons of the caudal ventral respiratory group, giving rise to the sneezing response. Contributes to induction of acute itch, possibly through its activation on dorsal root ganglion neurons by the NMB peptide. Plays a role in the innate immune response to influenza A virus infection by enhancing interferon alpha expression and reducing expression of IL6. Plays a role in CSF1-induced proliferation of osteoclast precursors by contributing to the positive regulation of the expression of the CSF1 receptor CSF1R. This chain is Neuromedin-B receptor (Nmbr), found in Rattus norvegicus (Rat).